We begin with the raw amino-acid sequence, 200 residues long: Adenylate kinase (200 aa).

ATP is bound at residue 11 to 16; the sequence is GAGKGT. Residues 31-60 are NMP; sequence STGDIFRQNIKDRTELGQQVQALVDAGNYV. Residues T32, R37, 58–60, 86–89, and Q93 contribute to the AMP site; these read NYV and GYPR. The LID stretch occupies residues 127-137; that stretch reads RRAAEQGRADD. Residue R128 participates in ATP binding. The AMP site is built by R134 and R145. ATP is bound at residue G173.

This sequence belongs to the adenylate kinase family. As to quaternary structure, monomer.

It localises to the cytoplasm. The enzyme catalyses AMP + ATP = 2 ADP. It participates in purine metabolism; AMP biosynthesis via salvage pathway; AMP from ADP: step 1/1. Catalyzes the reversible transfer of the terminal phosphate group between ATP and AMP. Plays an important role in cellular energy homeostasis and in adenine nucleotide metabolism. The polypeptide is Adenylate kinase (Clavibacter michiganensis subsp. michiganensis (strain NCPPB 382)).